Here is a 179-residue protein sequence, read N- to C-terminus: Large ribosomal subunit protein uL5c (179 aa).

This sequence belongs to the universal ribosomal protein uL5 family. Part of the 50S ribosomal subunit; contacts the 5S rRNA.

It is found in the plastid. Functionally, binds 5S rRNA, forms part of the central protuberance of the 50S subunit. This is Large ribosomal subunit protein uL5c (rpl5) from Euglena longa (Euglenophycean alga).